A 94-amino-acid chain; its full sequence is Large ribosomal subunit protein bL27 (94 aa).

A propeptide spanning residues 1 to 9 (MLKLNLQFF) is cleaved from the precursor. Residues 13–32 (KGLGSTKNGRDSESKRLGAK) form a disordered region. Residues 20-32 (NGRDSESKRLGAK) are compositionally biased toward basic and acidic residues.

It belongs to the bacterial ribosomal protein bL27 family. Post-translationally, the N-terminus is cleaved by ribosomal processing cysteine protease Prp.

This is Large ribosomal subunit protein bL27 from Staphylococcus saprophyticus subsp. saprophyticus (strain ATCC 15305 / DSM 20229 / NCIMB 8711 / NCTC 7292 / S-41).